A 252-amino-acid chain; its full sequence is Hydroxyacylglutathione hydrolase (252 aa).

The Zn(2+) site is built by histidine 52, histidine 54, aspartate 56, histidine 57, histidine 107, aspartate 128, and histidine 166.

The protein belongs to the metallo-beta-lactamase superfamily. Glyoxalase II family. In terms of assembly, monomer. It depends on Zn(2+) as a cofactor.

The enzyme catalyses an S-(2-hydroxyacyl)glutathione + H2O = a 2-hydroxy carboxylate + glutathione + H(+). It participates in secondary metabolite metabolism; methylglyoxal degradation; (R)-lactate from methylglyoxal: step 2/2. In terms of biological role, thiolesterase that catalyzes the hydrolysis of S-D-lactoyl-glutathione to form glutathione and D-lactic acid. The sequence is that of Hydroxyacylglutathione hydrolase from Neisseria meningitidis serogroup C / serotype 2a (strain ATCC 700532 / DSM 15464 / FAM18).